The primary structure comprises 59 residues: MKAFYGILIIFILISMLDLSQQVFINAKCRGSPQCLPKCKEAIGKAAGKCMNGKCKCYP.

A signal peptide spans 1 to 22 (MKAFYGILIIFILISMLDLSQQ). 3 disulfide bridges follow: Cys-29-Cys-50, Cys-35-Cys-55, and Cys-39-Cys-57.

This sequence belongs to the short scorpion toxin superfamily. Potassium channel inhibitor family. Alpha-KTx 04 subfamily. Expressed by the venom gland.

The protein localises to the secreted. In terms of biological role, potently blocks Kv1.1/KCNA1 (85%), Kv1.2/KCNA2 (91%), Kv1.3/KCNA3 (89%), Kv1.6/KCNA6 (94%), and Shaker (97%). The sequence is that of Putative potassium channel toxin Ts23 from Tityus serrulatus (Brazilian scorpion).